The sequence spans 463 residues: DDB1- and CUL4-associated factor 12-like protein 1 (463 aa).

The segment at 1–35 (MAQQQTGSRKRKAPAVEADAESSPSQGLAAADGEG) is disordered. 6 WD repeats span residues 87–137 (LTER…PLLR), 138–184 (DSEA…SLDP), 185–252 (LCLG…DVEA), 253–297 (IPRA…ALSR), 298–341 (LLSI…QQNI), and 342–376 (RPLC…LFYD).

Belongs to the WD repeat DCAF12 family.

The chain is DDB1- and CUL4-associated factor 12-like protein 1 (DCAF12L1) from Homo sapiens (Human).